We begin with the raw amino-acid sequence, 827 residues long: Penicillin-binding protein 1A (827 aa).

Over 1–18 (MGKKKKKRKSSAFKIILN) the chain is Cytoplasmic. Residues 19–39 (VFLSIFLVAGVAFGGIVFAMI) traverse the membrane as a helical; Signal-anchor for type II membrane protein segment. The Extracellular segment spans residues 40–827 (KTAPPLNVQQ…QNHEDNKNKQ (788 aa)). Residues 57 to 229 (SILYDDKGQY…PSVYYPYSSA (173 aa)) are transglycosylase. Glu-96 functions as the Proton donor; for transglycosylase activity in the catalytic mechanism. A transpeptidase region spans residues 357–641 (ASAVIMDYHN…AARLWGDIMK (285 aa)). The Acyl-ester intermediate; for transpeptidase activity role is filled by Ser-398. Residues 755-827 (GSLPPTEEKN…QNHEDNKNKQ (73 aa)) form a disordered region. The span at 760–790 (TEEKNNSNTRDKNKDKNKDKDKNKNKDKNPS) shows a compositional bias: basic and acidic residues. A compositionally biased stretch (low complexity) spans 791-817 (QDKPNNNNNNNNNDNNNNTKPPENDSN). Basic and acidic residues predominate over residues 818-827 (QNHEDNKNKQ).

In the N-terminal section; belongs to the glycosyltransferase 51 family. The protein in the C-terminal section; belongs to the transpeptidase family.

The protein localises to the cell membrane. The catalysed reaction is [GlcNAc-(1-&gt;4)-Mur2Ac(oyl-L-Ala-gamma-D-Glu-L-Lys-D-Ala-D-Ala)](n)-di-trans,octa-cis-undecaprenyl diphosphate + beta-D-GlcNAc-(1-&gt;4)-Mur2Ac(oyl-L-Ala-gamma-D-Glu-L-Lys-D-Ala-D-Ala)-di-trans,octa-cis-undecaprenyl diphosphate = [GlcNAc-(1-&gt;4)-Mur2Ac(oyl-L-Ala-gamma-D-Glu-L-Lys-D-Ala-D-Ala)](n+1)-di-trans,octa-cis-undecaprenyl diphosphate + di-trans,octa-cis-undecaprenyl diphosphate + H(+). It carries out the reaction Preferential cleavage: (Ac)2-L-Lys-D-Ala-|-D-Ala. Also transpeptidation of peptidyl-alanyl moieties that are N-acyl substituents of D-alanine.. The protein operates within cell wall biogenesis; peptidoglycan biosynthesis. In terms of biological role, cell wall formation. Synthesis of cross-linked peptidoglycan from the lipid intermediates. The enzyme has a penicillin-insensitive transglycosylase N-terminal domain (formation of linear glycan strands) and a penicillin-sensitive transpeptidase C-terminal domain (cross-linking of the peptide subunits). The chain is Penicillin-binding protein 1A (pbpA) from Clostridium botulinum (strain Langeland / NCTC 10281 / Type F).